Consider the following 417-residue polypeptide: Phosphoglycerate kinase (417 aa).

Residues valine 23, aspartate 24, phenylalanine 25, asparagine 26, glutamine 39, arginine 40, serine 63, histidine 64, glycine 66, arginine 67, leucine 122, arginine 123, histidine 170, and arginine 171 each contribute to the (2R)-3-phosphoglycerate site. Residue glycine 214 participates in ADP binding. Residue glycine 214 participates in CDP binding. 2 residues coordinate AMP: alanine 215 and lysine 216. Alanine 215 contributes to the ATP binding site. Position 215 (alanine 215) interacts with Mg(2+). Aspartate 219 contributes to the CDP binding site. Residue aspartate 219 coordinates Mg(2+). Position 220 (lysine 220) interacts with AMP. Position 220 (lysine 220) interacts with ATP. Glycine 238 contacts ADP. CDP is bound at residue glycine 238. Residues alanine 239 and glycine 313 each contribute to the AMP site. Residues alanine 239 and glycine 313 each coordinate ATP. Residues glycine 338 and phenylalanine 343 each coordinate CDP. Residue phenylalanine 343 participates in ADP binding. Glutamate 344 provides a ligand contact to AMP. The ATP site is built by glutamate 344, aspartate 375, and threonine 376. A Mg(2+)-binding site is contributed by aspartate 375.

It belongs to the phosphoglycerate kinase family. In terms of assembly, monomer. Mg(2+) is required as a cofactor.

The protein resides in the cytoplasm. Its subcellular location is the mitochondrion. The enzyme catalyses (2R)-3-phosphoglycerate + ATP = (2R)-3-phospho-glyceroyl phosphate + ADP. The protein operates within carbohydrate degradation; glycolysis; pyruvate from D-glyceraldehyde 3-phosphate: step 2/5. Its function is as follows. Catalyzes one of the two ATP producing reactions in the glycolytic pathway via the reversible conversion of 1,3-diphosphoglycerate to 3-phosphoglycerate. Both L- and D- forms of purine and pyrimidine nucleotides can be used as substrates, but the activity is much lower on pyrimidines. Negatively regulates the biosynthesis of acetyl-CoA from pyruvate in the mitochondrion. The polypeptide is Phosphoglycerate kinase (pgkA) (Aspergillus oryzae (strain ATCC 42149 / RIB 40) (Yellow koji mold)).